The following is a 619-amino-acid chain: UvrABC system protein C (619 aa).

Positions 20–98 (TAPGVYRMYA…IKSLSPRYNV (79 aa)) constitute a GIY-YIG domain. The UVR domain occupies 207–242 (DQLGEEIMHSMQQASEALEFERAARLRDLLSSLRSM).

It belongs to the UvrC family. As to quaternary structure, interacts with UvrB in an incision complex.

Its subcellular location is the cytoplasm. In terms of biological role, the UvrABC repair system catalyzes the recognition and processing of DNA lesions. UvrC both incises the 5' and 3' sides of the lesion. The N-terminal half is responsible for the 3' incision and the C-terminal half is responsible for the 5' incision. This is UvrABC system protein C from Xanthomonas euvesicatoria pv. vesicatoria (strain 85-10) (Xanthomonas campestris pv. vesicatoria).